The chain runs to 352 residues: Maleylacetate reductase (352 aa).

Belongs to the iron-containing alcohol dehydrogenase family.

It carries out the reaction 3-oxoadipate + NAD(+) = maleylacetate + NADH + H(+). The enzyme catalyses 3-oxoadipate + NADP(+) = maleylacetate + NADPH + H(+). The protein operates within aromatic compound metabolism; 3-chlorocatechol degradation. This chain is Maleylacetate reductase (tcbF), found in Pseudomonas sp. (strain P51).